Here is a 148-residue protein sequence, read N- to C-terminus: [Ribosomal protein bS18]-alanine N-acetyltransferase (148 aa).

The region spanning 2 to 147 (NTISILSTTD…DAIIMALPIS (146 aa)) is the N-acetyltransferase domain. Acetyl-CoA is bound by residues 69 to 71 (IAV) and 77 to 82 (RRGLGR). The active-site Proton acceptor is the E103. Acetyl-CoA is bound at residue N108. The active-site Proton donor is Y115.

This sequence belongs to the acetyltransferase family. RimI subfamily.

It is found in the cytoplasm. It catalyses the reaction N-terminal L-alanyl-[ribosomal protein bS18] + acetyl-CoA = N-terminal N(alpha)-acetyl-L-alanyl-[ribosomal protein bS18] + CoA + H(+). Functionally, acetylates the N-terminal alanine of ribosomal protein bS18. The chain is [Ribosomal protein bS18]-alanine N-acetyltransferase from Salmonella typhimurium (strain LT2 / SGSC1412 / ATCC 700720).